We begin with the raw amino-acid sequence, 487 residues long: Putative B3 domain-containing protein At1g78640 (487 aa).

2 consecutive DNA-binding regions (TF-B3) follow at residues 171 to 269 (RLLL…QQGT) and 379 to 474 (RLTL…LFRV).

It is found in the nucleus. The sequence is that of Putative B3 domain-containing protein At1g78640 from Arabidopsis thaliana (Mouse-ear cress).